The following is a 506-amino-acid chain: Histidine ammonia-lyase (506 aa).

A cross-link (5-imidazolinone (Ala-Gly)) is located at residues 143 to 145 (ASG). Position 144 is a 2,3-didehydroalanine (Ser) (Ser144).

The protein belongs to the PAL/histidase family. Post-translationally, contains an active site 4-methylidene-imidazol-5-one (MIO), which is formed autocatalytically by cyclization and dehydration of residues Ala-Ser-Gly.

The protein resides in the cytoplasm. The enzyme catalyses L-histidine = trans-urocanate + NH4(+). Its pathway is amino-acid degradation; L-histidine degradation into L-glutamate; N-formimidoyl-L-glutamate from L-histidine: step 1/3. The protein is Histidine ammonia-lyase of Salmonella agona (strain SL483).